Consider the following 521-residue polypeptide: Vang-like protein 2 (521 aa).

Positions 1-81 (MDNDSQYSGY…TTVVTGTSEH (81 aa)) are disordered. Residues 1–108 (MDNDSQYSGY…AKLDCSRHLG (108 aa)) lie on the Cytoplasmic side of the membrane. The span at 15-33 (GHSRSSRKHRDRRERHRSK) shows a compositional bias: basic residues. Positions 57 to 67 (ESTRGEDRDDN) are enriched in basic and acidic residues. Positions 69–81 (GETTTVVTGTSEH) are enriched in low complexity. Residues 109 to 129 (VVIGGALALLSFLTPIAFMLL) traverse the membrane as a helical segment. The Extracellular segment spans residues 130–147 (PQILWREDLEQCGTACEG). Residues 148 to 168 (LFISVAFKLLILLLGSWALFF) traverse the membrane as a helical segment. Topologically, residues 169 to 178 (RRPKAFFPRV) are cytoplasmic. Residues 179–199 (FVFRALLMVLVFLLVVSYWLF) traverse the membrane as a helical segment. Over 200–218 (YGVRILESRDKNYQGIVQY) the chain is Extracellular. Residues 219-239 (AVSLVDALLFVHYLAVVLLEL) traverse the membrane as a helical segment. The Cytoplasmic portion of the chain corresponds to 240–521 (RQLQPQFTVK…VMRLQSETSV (282 aa)). Positions 518–521 (ETSV) match the PDZ-binding motif.

The protein belongs to the Vang family. Interacts with dvl/dsh. Interacts with prickle3.

The protein resides in the cell membrane. Functionally, has a role in non-canonical Wnt/planar cell polarity (PCP) signaling; can recruit dvl/dsh and prickle from the cytoplasm to the plasma membrane. Acts in a PCP complex to regulate the polarized assembly of fibronectrin on the surface of the mesoderm during gastrulation. Regulates convergent extension in both dorsal mesoderm and neural tissue without affecting cell fate. Regulates neural fold closure during neurulation. May be required for cell surface localization of fzd3 and fzd6 in the inner ear. The protein is Vang-like protein 2 of Xenopus tropicalis (Western clawed frog).